The following is a 387-amino-acid chain: 3-ketoacyl-CoA thiolase (387 aa).

Residue cysteine 91 is the Acyl-thioester intermediate of the active site. Residues histidine 343 and cysteine 373 each act as proton acceptor in the active site.

The protein belongs to the thiolase-like superfamily. Thiolase family. As to quaternary structure, heterotetramer of two alpha chains (FadB) and two beta chains (FadA).

Its subcellular location is the cytoplasm. It catalyses the reaction an acyl-CoA + acetyl-CoA = a 3-oxoacyl-CoA + CoA. Its pathway is lipid metabolism; fatty acid beta-oxidation. Functionally, catalyzes the final step of fatty acid oxidation in which acetyl-CoA is released and the CoA ester of a fatty acid two carbons shorter is formed. The protein is 3-ketoacyl-CoA thiolase of Salmonella paratyphi A (strain ATCC 9150 / SARB42).